We begin with the raw amino-acid sequence, 71 residues long: MNYYRKRLSPLPPNQPIDYKDTELLRKFITERGKILPRRITGLTAKQQRDLTTAVKRSRLVALLPFVNKEI.

Belongs to the bacterial ribosomal protein bS18 family. In terms of assembly, part of the 30S ribosomal subunit. Forms a tight heterodimer with protein bS6.

Binds as a heterodimer with protein bS6 to the central domain of the 16S rRNA, where it helps stabilize the platform of the 30S subunit. In Synechocystis sp. (strain ATCC 27184 / PCC 6803 / Kazusa), this protein is Small ribosomal subunit protein bS18.